Consider the following 1012-residue polypeptide: DNA polymerase catalytic subunit (1012 aa).

This sequence belongs to the DNA polymerase type-B family.

The protein resides in the host nucleus. It carries out the reaction DNA(n) + a 2'-deoxyribonucleoside 5'-triphosphate = DNA(n+1) + diphosphate. The chain is DNA polymerase catalytic subunit (U38) from Homo sapiens (Human).